The chain runs to 186 residues: Threonylcarbamoyl-AMP synthase (186 aa).

The region spanning 5-186 (TQSINDAVKC…DAITGEILRL (182 aa)) is the YrdC-like domain.

It belongs to the SUA5 family. TsaC subfamily.

It localises to the cytoplasm. It catalyses the reaction L-threonine + hydrogencarbonate + ATP = L-threonylcarbamoyladenylate + diphosphate + H2O. Its function is as follows. Required for the formation of a threonylcarbamoyl group on adenosine at position 37 (t(6)A37) in tRNAs that read codons beginning with adenine. Catalyzes the conversion of L-threonine, HCO(3)(-)/CO(2) and ATP to give threonylcarbamoyl-AMP (TC-AMP) as the acyladenylate intermediate, with the release of diphosphate. The sequence is that of Threonylcarbamoyl-AMP synthase from Coxiella burnetii (strain RSA 493 / Nine Mile phase I).